The primary structure comprises 835 residues: Replication origin-binding protein (835 aa).

The Helicase ATP-binding domain maps to 54 to 215; that stretch reads PGMSQTRPVT…SGLRGDENIH (162 aa). Position 67 to 74 (67 to 74) interacts with ATP; sequence APMGSGKT.

Belongs to the herpesviridae OriBP family. In terms of assembly, homodimer. Interacts with the major DNA-binding protein. Interacts with the helicase/primase component 52 and the polymerase accessory protein.

The protein resides in the host nucleus. Functions as a docking protein to recruit essential components of the viral replication machinery to viral DNA origins. In the presence of the major DNA-binding protein, opens dsDNA leading to a conformational change in the origin that facilitates DNA unwinding and subsequent replication. The sequence is that of Replication origin-binding protein from Varicella-zoster virus (strain Oka vaccine) (HHV-3).